A 426-amino-acid polypeptide reads, in one-letter code: Enolase (426 aa).

Q162 contributes to the (2R)-2-phosphoglycerate binding site. The Proton donor role is filled by E204. Mg(2+) is bound by residues D241, E284, and D311. (2R)-2-phosphoglycerate is bound by residues K336, R365, S366, and K387. The active-site Proton acceptor is the K336.

Belongs to the enolase family. In terms of assembly, component of the RNA degradosome, a multiprotein complex involved in RNA processing and mRNA degradation. It depends on Mg(2+) as a cofactor.

The protein localises to the cytoplasm. It localises to the secreted. The protein resides in the cell surface. The catalysed reaction is (2R)-2-phosphoglycerate = phosphoenolpyruvate + H2O. It participates in carbohydrate degradation; glycolysis; pyruvate from D-glyceraldehyde 3-phosphate: step 4/5. Functionally, catalyzes the reversible conversion of 2-phosphoglycerate (2-PG) into phosphoenolpyruvate (PEP). It is essential for the degradation of carbohydrates via glycolysis. In Thioalkalivibrio sulfidiphilus (strain HL-EbGR7), this protein is Enolase.